A 394-amino-acid chain; its full sequence is Choline/ethanolamine kinase (394 aa).

Positions 1 to 42 are disordered; it reads MAADGTGVVGGGAVGGGLPKDGLQDAKCPEPIPNRRRASSLS. Ala2 carries the N-acetylalanine modification. Gly residues predominate over residues 7 to 19; sequence GVVGGGAVGGGLP. Residues 75-81, Arg104, 146-152, Gln244, and Asp264 contribute to the ATP site; these read SGGLSNL and QYLPSRP. 77–79 is a binding site for substrate; sequence GLS.

The protein belongs to the choline/ethanolamine kinase family. Homodimer, and heterodimer with CHKA. In terms of tissue distribution, expressed ubiquitously with the highest level in testis.

The enzyme catalyses choline + ATP = phosphocholine + ADP + H(+). It carries out the reaction ethanolamine + ATP = phosphoethanolamine + ADP + H(+). The protein operates within phospholipid metabolism; phosphatidylethanolamine biosynthesis; phosphatidylethanolamine from ethanolamine: step 1/3. Functionally, has a key role in phospholipid metabolism, and catalyzes the first step of phosphatidylethanolamine and phosphatidylcholine biosynthesis. The sequence is that of Choline/ethanolamine kinase (Chkb) from Mus musculus (Mouse).